The following is a 712-amino-acid chain: Satratoxin biosynthesis SC3 cluster transcription factor SAT20 (712 aa).

4 stretches are compositionally biased toward polar residues: residues 1 to 10 (MPNLPGSSDS), 25 to 36 (CSSTKPNAAQEN), 131 to 145 (SEPS…WPSL), and 269 to 282 (SLPS…SSTG). Disordered regions lie at residues 1-43 (MPNL…ELAQ), 115-145 (SQNA…WPSL), and 264-294 (PVSG…KADR). Positions 306–339 (CFRCRMYKENCDPGLPCKNCMRVQVTRRTFFGPC) form a DNA-binding region, zn(2)-C6 fungal-type. Residues 530-560 (QIQIMVAQVMLDKQKNALKRLQERALSKNRH) adopt a coiled-coil conformation.

It localises to the nucleus. In terms of biological role, transcriptional regulator that may regulate the expression of the satratoxin biosynthesis SC3 cluster, one of the 3 clusters involved in the biosynthesis of satratoxins, trichothecene mycotoxins that are associated with human food poisonings. The polypeptide is Satratoxin biosynthesis SC3 cluster transcription factor SAT20 (Stachybotrys chartarum (strain CBS 109288 / IBT 7711) (Toxic black mold)).